The chain runs to 326 residues: Transmembrane protein 255B (326 aa).

Transmembrane regions (helical) follow at residues 26–46 (LWFVGSLLLVSVLIVTVGLAA), 55–75 (VGGYYPGIILGFGSFLGIIGI), 85–105 (LVAAIVFISFGVVAAFCCAIV), and 200–220 (AVLNVLGLFLGIITAAVLGAF). The tract at residues 284–326 (LASSEDLQPPSPSSSGSGLPGQAPPCYAPTYFPPGEKPPPYAP) is disordered. Pro residues predominate over residues 305–326 (QAPPCYAPTYFPPGEKPPPYAP).

This sequence belongs to the TMEM255 family.

It localises to the membrane. The polypeptide is Transmembrane protein 255B (TMEM255B) (Homo sapiens (Human)).